Reading from the N-terminus, the 157-residue chain is Ribonuclease 8 (157 aa).

The first 30 residues, methionine 1–alanine 30, serve as a signal peptide directing secretion. Histidine 45 serves as the catalytic Proton acceptor. Disulfide bonds link cysteine 53–cysteine 96, cysteine 67–cysteine 121, cysteine 85–cysteine 136, and cysteine 92–cysteine 99. Residues lysine 68 to threonine 72 and lysine 93 each bind substrate. Histidine 152 (proton donor) is an active-site residue.

The protein belongs to the pancreatic ribonuclease family.

Its subcellular location is the secreted. Has a low ribonuclease activity. In Pan troglodytes (Chimpanzee), this protein is Ribonuclease 8 (RNASE8).